The chain runs to 81 residues: Large ribosomal subunit protein bL31B (81 aa).

The protein belongs to the bacterial ribosomal protein bL31 family. Type B subfamily. In terms of assembly, part of the 50S ribosomal subunit.

The protein is Large ribosomal subunit protein bL31B of Bacillus anthracis (strain A0248).